A 162-amino-acid polypeptide reads, in one-letter code: Phosphopantetheine adenylyltransferase (162 aa).

Residue Thr14 coordinates substrate. ATP contacts are provided by residues Thr14 to Phe15 and His22. Residues Lys46, Leu78, and Arg92 each coordinate substrate. Residues Gly93–Arg95, Glu103, and His128–Ser134 each bind ATP.

This sequence belongs to the bacterial CoaD family. In terms of assembly, homohexamer. The cofactor is Mg(2+).

It is found in the cytoplasm. It carries out the reaction (R)-4'-phosphopantetheine + ATP + H(+) = 3'-dephospho-CoA + diphosphate. The protein operates within cofactor biosynthesis; coenzyme A biosynthesis; CoA from (R)-pantothenate: step 4/5. Its function is as follows. Reversibly transfers an adenylyl group from ATP to 4'-phosphopantetheine, yielding dephospho-CoA (dPCoA) and pyrophosphate. The protein is Phosphopantetheine adenylyltransferase of Xylella fastidiosa (strain 9a5c).